A 531-amino-acid chain; its full sequence is Pescadillo homolog (531 aa).

The BRCT domain occupies 309-398; sequence SIKTMFKGCV…RKLPTERYMP (90 aa).

This sequence belongs to the pescadillo family.

It localises to the nucleus. It is found in the nucleolus. The protein resides in the nucleoplasm. Functionally, required for maturation of ribosomal RNAs and formation of the large ribosomal subunit. The chain is Pescadillo homolog from Caenorhabditis elegans.